The primary structure comprises 187 residues: ATP synthase subunit b 2 (187 aa).

Residues 1 to 12 (MAQERAEHESAD) are compositionally biased toward basic and acidic residues. The tract at residues 1 to 31 (MAQERAEHESADQHTTSTGVPHEGQGEPFPP) is disordered. The chain crosses the membrane as a helical span at residues 40-60 (LLIWLAISFLLLYALMSKLVL).

This sequence belongs to the ATPase B chain family. In terms of assembly, F-type ATPases have 2 components, F(1) - the catalytic core - and F(0) - the membrane proton channel. F(1) has five subunits: alpha(3), beta(3), gamma(1), delta(1), epsilon(1). F(0) has three main subunits: a(1), b(2) and c(10-14). The alpha and beta chains form an alternating ring which encloses part of the gamma chain. F(1) is attached to F(0) by a central stalk formed by the gamma and epsilon chains, while a peripheral stalk is formed by the delta and b chains.

It localises to the cell inner membrane. In terms of biological role, f(1)F(0) ATP synthase produces ATP from ADP in the presence of a proton or sodium gradient. F-type ATPases consist of two structural domains, F(1) containing the extramembraneous catalytic core and F(0) containing the membrane proton channel, linked together by a central stalk and a peripheral stalk. During catalysis, ATP synthesis in the catalytic domain of F(1) is coupled via a rotary mechanism of the central stalk subunits to proton translocation. Its function is as follows. Component of the F(0) channel, it forms part of the peripheral stalk, linking F(1) to F(0). The b'-subunit is a diverged and duplicated form of b found in plants and photosynthetic bacteria. This Beijerinckia indica subsp. indica (strain ATCC 9039 / DSM 1715 / NCIMB 8712) protein is ATP synthase subunit b 2 (atpF2).